The following is a 366-amino-acid chain: Chorismate synthase (366 aa).

R48 contacts NADP(+). FMN is bound by residues 125-127 (RSS), 241-242 (NA), G285, 300-304 (KPTSS), and R326.

It belongs to the chorismate synthase family. In terms of assembly, homotetramer. Requires FMNH2 as cofactor.

It catalyses the reaction 5-O-(1-carboxyvinyl)-3-phosphoshikimate = chorismate + phosphate. It participates in metabolic intermediate biosynthesis; chorismate biosynthesis; chorismate from D-erythrose 4-phosphate and phosphoenolpyruvate: step 7/7. In terms of biological role, catalyzes the anti-1,4-elimination of the C-3 phosphate and the C-6 proR hydrogen from 5-enolpyruvylshikimate-3-phosphate (EPSP) to yield chorismate, which is the branch point compound that serves as the starting substrate for the three terminal pathways of aromatic amino acid biosynthesis. This reaction introduces a second double bond into the aromatic ring system. This Ruegeria pomeroyi (strain ATCC 700808 / DSM 15171 / DSS-3) (Silicibacter pomeroyi) protein is Chorismate synthase.